The primary structure comprises 228 residues: Vacuolar-sorting protein snf7 (228 aa).

Coiled-coil stretches lie at residues 25–94 and 125–226; these read ILGL…QINA and EKVD…QAEM.

It belongs to the SNF7 family. In terms of assembly, a component of the endosomal sorting required for transport complex III (ESCRT-III).

It localises to the cytoplasm. Its subcellular location is the endosome membrane. Its function is as follows. Required for the sorting and concentration of proteins resulting in the entry of these proteins into the invaginating vesicles of the multivesicular body (MVB). Also required for the proteolytic cleavage of the transcription factor pacc-1 in response to alkaline ambient pH. The chain is Vacuolar-sorting protein snf7 (vsp-3) from Neurospora crassa (strain ATCC 24698 / 74-OR23-1A / CBS 708.71 / DSM 1257 / FGSC 987).